A 447-amino-acid chain; its full sequence is ATP-dependent protease ATPase subunit HslU (447 aa).

ATP contacts are provided by residues I17 and 59–64; that span reads GVGKTE. The disordered stretch occupies residues 136 to 160; sequence PPARGGFQGEPTAEEKPTEKKESAT. The segment covering 148–159 has biased composition (basic and acidic residues); that stretch reads AEEKPTEKKESA. Residues D260, E325, and R397 each contribute to the ATP site.

The protein belongs to the ClpX chaperone family. HslU subfamily. As to quaternary structure, a double ring-shaped homohexamer of HslV is capped on each side by a ring-shaped HslU homohexamer. The assembly of the HslU/HslV complex is dependent on binding of ATP.

Its subcellular location is the cytoplasm. In terms of biological role, ATPase subunit of a proteasome-like degradation complex; this subunit has chaperone activity. The binding of ATP and its subsequent hydrolysis by HslU are essential for unfolding of protein substrates subsequently hydrolyzed by HslV. HslU recognizes the N-terminal part of its protein substrates and unfolds these before they are guided to HslV for hydrolysis. The chain is ATP-dependent protease ATPase subunit HslU from Coxiella burnetii (strain RSA 331 / Henzerling II).